We begin with the raw amino-acid sequence, 426 residues long: Histidine--tRNA ligase (426 aa).

This sequence belongs to the class-II aminoacyl-tRNA synthetase family. Homodimer.

It is found in the cytoplasm. The catalysed reaction is tRNA(His) + L-histidine + ATP = L-histidyl-tRNA(His) + AMP + diphosphate + H(+). The chain is Histidine--tRNA ligase from Picosynechococcus sp. (strain ATCC 27264 / PCC 7002 / PR-6) (Agmenellum quadruplicatum).